A 439-amino-acid chain; its full sequence is Cysteine--tRNA ligase (439 aa).

C26 provides a ligand contact to Zn(2+). Positions 28-38 match the 'HIGH' region motif; it reads PTVYNHVHIGN. The Zn(2+) site is built by C206, H231, and E235. Positions 263 to 267 match the 'KMSKS' region motif; the sequence is KMSKS. K266 is an ATP binding site.

Belongs to the class-I aminoacyl-tRNA synthetase family. As to quaternary structure, monomer. Requires Zn(2+) as cofactor.

The protein resides in the cytoplasm. The enzyme catalyses tRNA(Cys) + L-cysteine + ATP = L-cysteinyl-tRNA(Cys) + AMP + diphosphate. This is Cysteine--tRNA ligase from Malacoplasma penetrans (strain HF-2) (Mycoplasma penetrans).